Reading from the N-terminus, the 438-residue chain is Transmembrane protein 184C (438 aa).

Helical transmembrane passes span 17-37, 48-68, 86-106, 176-196, 212-232, 254-274, and 287-307; these read LAVV…VWEL, AWFI…WVIL, ILWM…YPSI, VLQY…CELL, YLVI…LLFY, VVFV…VGVI, and AVAT…AAIA. Residues 358–438 form a disordered region; that stretch reads PRKKFFPEDQ…EEPSEKPVAS (81 aa). Low complexity-rich tracts occupy residues 374–390 and 404–413; these read SLLS…ASSV and TVTPQTTPTT. Basic and acidic residues predominate over residues 426 to 438; the sequence is GVREEPSEKPVAS.

It belongs to the TMEM184 family.

It localises to the membrane. Its function is as follows. Possible tumor suppressor which may play a role in cell growth. In Bos taurus (Bovine), this protein is Transmembrane protein 184C (TMEM184C).